Reading from the N-terminus, the 523-residue chain is Peptide chain release factor 3 (523 aa).

The tr-type G domain maps to 10 to 277 (KKRRTFAIIS…SFVDLAPAPE (268 aa)). Residues 19-26 (SHPDAGKT), 87-91 (DTPGH), and 141-144 (NKLD) each bind GTP.

Belongs to the TRAFAC class translation factor GTPase superfamily. Classic translation factor GTPase family. PrfC subfamily.

The protein localises to the cytoplasm. Increases the formation of ribosomal termination complexes and stimulates activities of RF-1 and RF-2. It binds guanine nucleotides and has strong preference for UGA stop codons. It may interact directly with the ribosome. The stimulation of RF-1 and RF-2 is significantly reduced by GTP and GDP, but not by GMP. The chain is Peptide chain release factor 3 from Lactobacillus helveticus (strain DPC 4571).